Here is a 233-residue protein sequence, read N- to C-terminus: Octanoyltransferase (233 aa).

The 179-residue stretch at 34 to 212 (PDRPDVLLLL…AFAQTFELDL (179 aa)) folds into the BPL/LPL catalytic domain. Residues 76 to 83 (RGGEVTHH), 143 to 145 (AIG), and 156 to 158 (GFA) each bind substrate. Cys174 functions as the Acyl-thioester intermediate in the catalytic mechanism.

This sequence belongs to the LipB family.

Its subcellular location is the cytoplasm. It carries out the reaction octanoyl-[ACP] + L-lysyl-[protein] = N(6)-octanoyl-L-lysyl-[protein] + holo-[ACP] + H(+). It functions in the pathway protein modification; protein lipoylation via endogenous pathway; protein N(6)-(lipoyl)lysine from octanoyl-[acyl-carrier-protein]: step 1/2. Catalyzes the transfer of endogenously produced octanoic acid from octanoyl-acyl-carrier-protein onto the lipoyl domains of lipoate-dependent enzymes. Lipoyl-ACP can also act as a substrate although octanoyl-ACP is likely to be the physiological substrate. This chain is Octanoyltransferase, found in Synechococcus elongatus (strain ATCC 33912 / PCC 7942 / FACHB-805) (Anacystis nidulans R2).